The sequence spans 309 residues: Putative glycosyltransferase 48 (309 aa).

Belongs to the glycosyltransferase group 1 family. Glycosyltransferase 4 subfamily.

The protein is Putative glycosyltransferase 48 (SIFV0048) of Saccharolobus islandicus (Sulfolobus islandicus).